A 510-amino-acid polypeptide reads, in one-letter code: Glutamate--tRNA ligase (510 aa).

A 'HIGH' region motif is present at residues 15–25 (PSPTGDPHVGT). The 'KMSKS' region signature appears at 256-260 (KISKR). K259 contacts ATP.

The protein belongs to the class-I aminoacyl-tRNA synthetase family. Glutamate--tRNA ligase type 1 subfamily. As to quaternary structure, monomer.

It localises to the cytoplasm. The enzyme catalyses tRNA(Glu) + L-glutamate + ATP = L-glutamyl-tRNA(Glu) + AMP + diphosphate. Functionally, catalyzes the attachment of glutamate to tRNA(Glu) in a two-step reaction: glutamate is first activated by ATP to form Glu-AMP and then transferred to the acceptor end of tRNA(Glu). This Fusobacterium nucleatum subsp. nucleatum (strain ATCC 25586 / DSM 15643 / BCRC 10681 / CIP 101130 / JCM 8532 / KCTC 2640 / LMG 13131 / VPI 4355) protein is Glutamate--tRNA ligase.